A 729-amino-acid chain; its full sequence is Phosphoribosylformylglycinamidine synthase subunit PurL (729 aa).

His54 is a catalytic residue. Residues Tyr57 and Lys96 each coordinate ATP. A Mg(2+)-binding site is contributed by Glu98. Substrate contacts are provided by residues 99–102 and Arg121; that span reads SHNH. His100 functions as the Proton acceptor in the catalytic mechanism. Residue Asp122 coordinates Mg(2+). Gln245 lines the substrate pocket. Asp273 lines the Mg(2+) pocket. Position 317–319 (317–319) interacts with substrate; the sequence is ETQ. ATP is bound by residues Asp495 and Gly532. Asn533 contributes to the Mg(2+) binding site. Position 535 (Ser535) interacts with substrate.

The protein belongs to the FGAMS family. As to quaternary structure, monomer. Part of the FGAM synthase complex composed of 1 PurL, 1 PurQ and 2 PurS subunits.

The protein resides in the cytoplasm. It catalyses the reaction N(2)-formyl-N(1)-(5-phospho-beta-D-ribosyl)glycinamide + L-glutamine + ATP + H2O = 2-formamido-N(1)-(5-O-phospho-beta-D-ribosyl)acetamidine + L-glutamate + ADP + phosphate + H(+). Its pathway is purine metabolism; IMP biosynthesis via de novo pathway; 5-amino-1-(5-phospho-D-ribosyl)imidazole from N(2)-formyl-N(1)-(5-phospho-D-ribosyl)glycinamide: step 1/2. Functionally, part of the phosphoribosylformylglycinamidine synthase complex involved in the purines biosynthetic pathway. Catalyzes the ATP-dependent conversion of formylglycinamide ribonucleotide (FGAR) and glutamine to yield formylglycinamidine ribonucleotide (FGAM) and glutamate. The FGAM synthase complex is composed of three subunits. PurQ produces an ammonia molecule by converting glutamine to glutamate. PurL transfers the ammonia molecule to FGAR to form FGAM in an ATP-dependent manner. PurS interacts with PurQ and PurL and is thought to assist in the transfer of the ammonia molecule from PurQ to PurL. This chain is Phosphoribosylformylglycinamidine synthase subunit PurL, found in Staphylococcus aureus (strain bovine RF122 / ET3-1).